The sequence spans 382 residues: Farnesyl diphosphate synthase (382 aa).

Positions 81, 84, and 120 each coordinate isopentenyl diphosphate. Mg(2+)-binding residues include Asp-127 and Asp-131. Arg-136 contacts dimethylallyl diphosphate. Arg-137 is a binding site for isopentenyl diphosphate. Residues Lys-230, Thr-231, Gln-270, Lys-287, and Lys-296 each contribute to the dimethylallyl diphosphate site.

It belongs to the FPP/GGPP synthase family. Requires Mg(2+) as cofactor.

It is found in the cytoplasm. The catalysed reaction is isopentenyl diphosphate + dimethylallyl diphosphate = (2E)-geranyl diphosphate + diphosphate. The enzyme catalyses isopentenyl diphosphate + (2E)-geranyl diphosphate = (2E,6E)-farnesyl diphosphate + diphosphate. It functions in the pathway isoprenoid biosynthesis; farnesyl diphosphate biosynthesis; farnesyl diphosphate from geranyl diphosphate and isopentenyl diphosphate: step 1/1. The protein operates within isoprenoid biosynthesis; geranyl diphosphate biosynthesis; geranyl diphosphate from dimethylallyl diphosphate and isopentenyl diphosphate: step 1/1. With respect to regulation, inhibited by aminobisphosphonate drugs (aBP), such as risedronate and alendronate. In terms of biological role, key enzyme in isoprenoid biosynthesis which catalyzes the formation of farnesyl diphosphate (FPP), a sterol precursor. Involved in the inhibition of cell growth. This Dictyostelium discoideum (Social amoeba) protein is Farnesyl diphosphate synthase (fps).